The sequence spans 171 residues: Myosin regulatory light polypeptide 9 (171 aa).

Over residues 1–15 (MSSKRAKAKTTKKRP) the composition is skewed to basic residues. The segment at 1–21 (MSSKRAKAKTTKKRPQSATSN) is disordered. Ser2 is modified (N-acetylserine). Position 19 is a phosphothreonine; by MLCK, CIT and ROCK2 (Thr19). Position 20 is a phosphoserine; by CDC42BP, CIT, MLCK, PAK1, ROCK1, ROCK2, DAPK1, DAPK2 and ZIPK/DAPK3 (Ser20). 2 EF-hand domains span residues 29–64 (SQIQ…LGKN) and 98–133 (DPED…MGDR). Residues Asp42, Asn44, Asp46, and Asp53 each coordinate Ca(2+).

Myosin is a hexamer of 2 heavy chains and 4 light chains: interacts with myosin heavy chain MYO19. Interacts with LUZP1; the interaction results in inhibition of phosphorylation of MYL9 by DAPK3. Phosphorylation increases the actin-activated myosin ATPase activity and thereby regulates the contractile activity. It is required to generate the driving force in the migration of the cells but not necessary for localization of myosin-2 at the leading edge. Phosphorylation is required for myotube formation. Phosphorylated by DAPK3; DAPK3-mediated phosphorylation is inhibited by LUZP1. As to expression, smooth muscle tissues and in some, but not all, nonmuscle cells.

Its subcellular location is the cytoplasm. It is found in the cytoskeleton. It localises to the cell cortex. Myosin regulatory subunit that plays an important role in regulation of both smooth muscle and nonmuscle cell contractile activity via its phosphorylation. Implicated in cytokinesis, receptor capping, and cell locomotion. In myoblasts, may regulate PIEZO1-dependent cortical actomyosin assembly involved in myotube formation. This chain is Myosin regulatory light polypeptide 9 (Myl9), found in Rattus norvegicus (Rat).